We begin with the raw amino-acid sequence, 467 residues long: Dihydroorotase (467 aa).

Zn(2+) is bound by residues H60 and H62. Substrate contacts are provided by residues 62–64 and N94; that span reads HFR. Zn(2+) is bound by residues E146, H180, H234, and D313. D313 is a catalytic residue. H317 serves as a coordination point for substrate. The interval 439–467 is disordered; that stretch reads KPGRGEFLEGSGKRSEEDEEENSEETGSD. The span at 441-454 shows a compositional bias: basic and acidic residues; that stretch reads GRGEFLEGSGKRSE. The span at 455–467 shows a compositional bias: acidic residues; the sequence is EDEEENSEETGSD.

Belongs to the metallo-dependent hydrolases superfamily. DHOase family. Class I DHOase subfamily. Zn(2+) serves as cofactor.

It carries out the reaction (S)-dihydroorotate + H2O = N-carbamoyl-L-aspartate + H(+). The protein operates within pyrimidine metabolism; UMP biosynthesis via de novo pathway; (S)-dihydroorotate from bicarbonate: step 3/3. Functionally, catalyzes the reversible cyclization of carbamoyl aspartate to dihydroorotate. The protein is Dihydroorotase of Methanosarcina acetivorans (strain ATCC 35395 / DSM 2834 / JCM 12185 / C2A).